Here is a 452-residue protein sequence, read N- to C-terminus: Eukaryotic translation initiation factor 4B3 (452 aa).

At A2 the chain carries N-acetylalanine. The segment at 20 to 282 (EEHEAELKQQ…PSGGSRPRLV (263 aa)) is disordered. The segment covering 28 to 37 (QQPSPTNQKS) has biased composition (polar residues). Positions 98 to 110 (PRERSAEELDRSK) are enriched in basic and acidic residues. Residues 111–122 (LGGGFRSYGGGR) show a composition bias toward gly residues. Residues 126–136 (ESSSSRWGSSR) are compositionally biased toward low complexity. Over residues 137-156 (VSEDGERRGGGFNRDREPSR) the composition is skewed to basic and acidic residues. 2 short sequence motifs (nuclear localization signal) span residues 172–179 (AKKPISGN) and 215–222 (PRRFVSSN). The span at 227–243 (DRFEKRGSFESLSRNRD) shows a compositional bias: basic and acidic residues. 3 positions are modified to phosphoserine: S234, S270, and S300. Residues 265 to 280 (GAANGSPPPSGGSRPR) show a composition bias toward low complexity. The tract at residues 349–452 (AAMEKPNEKS…AKKEETEDKI (104 aa)) is disordered. A compositionally biased stretch (basic and acidic residues) spans 369–386 (GRKDEERIERSWRKSTEH). A compositionally biased stretch (acidic residues) spans 387-397 (SEEDAQEEEPA). Basic and acidic residues-rich tracts occupy residues 400-419 (GAKK…KKEE) and 441-452 (EEAKKEETEDKI).

The protein belongs to the eIF-4 subunit B family. As to quaternary structure, homodimer. Nonspherical monomer. mRNA-discriminating component of initiation complexes. Interacts with MAD2. Post-translationally, phosphorylated.

The protein localises to the nucleus. In terms of biological role, promotes the eIF4F and eIF4A RNA-dependent ATP-hydrolysis activity with different efficiency depending on mRNAs, thus providing mRNA discrimination during initiation of translation. This Arabidopsis thaliana (Mouse-ear cress) protein is Eukaryotic translation initiation factor 4B3.